An 89-amino-acid polypeptide reads, in one-letter code: MATANINKSEIIAKFARGTNDTGSPEVQVALLTTRINELTPHFKANMKDHHSRRGLLRMVSRRRRLLDYLKASDADRYRALIEALGLRK.

Belongs to the universal ribosomal protein uS15 family. Part of the 30S ribosomal subunit. Forms a bridge to the 50S subunit in the 70S ribosome, contacting the 23S rRNA.

Its function is as follows. One of the primary rRNA binding proteins, it binds directly to 16S rRNA where it helps nucleate assembly of the platform of the 30S subunit by binding and bridging several RNA helices of the 16S rRNA. In terms of biological role, forms an intersubunit bridge (bridge B4) with the 23S rRNA of the 50S subunit in the ribosome. This is Small ribosomal subunit protein uS15 from Cupriavidus metallidurans (strain ATCC 43123 / DSM 2839 / NBRC 102507 / CH34) (Ralstonia metallidurans).